A 622-amino-acid chain; its full sequence is Probable E3 ubiquitin-protein ligase DTX2 (622 aa).

WWE domains follow at residues 8–97 (SLVQ…AVRR) and 98–174 (HLFP…SVRR). Residues R213, R215, and R233 each carry the asymmetric dimethylarginine modification. Residue K249 is modified to N6-acetyllysine. 2 disordered regions span residues 249 to 324 (KPSL…VPMQ) and 355 to 393 (APQPTSPPASRLASKSHGSVKRLRKMSVKGATPKPEPEP). Position 256 is an omega-N-methylarginine (R256). The segment covering 274–285 (LGSQPLYRSSLS) has biased composition (polar residues). Residues 299-322 (SGAVSASLPSGPSSSPGSVPATVP) show a composition bias toward low complexity. Residue S360 is modified to Phosphoserine. The segment covering 372 to 381 (GSVKRLRKMS) has biased composition (basic residues). The segment at 412–473 (CIICMEKLST…DGSLQCPSCK (62 aa)) adopts an RING-type zinc-finger fold.

This sequence belongs to the Deltex family. Homodimer. May form a heterodimer with other members of the Deltex family. Interacts with NOTCH1.

It localises to the cytoplasm. The protein localises to the nucleus. It carries out the reaction S-ubiquitinyl-[E2 ubiquitin-conjugating enzyme]-L-cysteine + [acceptor protein]-L-lysine = [E2 ubiquitin-conjugating enzyme]-L-cysteine + N(6)-ubiquitinyl-[acceptor protein]-L-lysine.. It functions in the pathway protein modification; protein ubiquitination. In terms of biological role, regulator of Notch signaling, a signaling pathway involved in cell-cell communications that regulates a broad spectrum of cell-fate determinations. Probably acts both as a positive and negative regulator of Notch, depending on the developmental and cell context. Mediates the antineural activity of Notch, possibly by inhibiting the transcriptional activation mediated by MATCH1. Functions as a ubiquitin ligase protein in vitro, suggesting that it may regulate the Notch pathway via some ubiquitin ligase activity. The chain is Probable E3 ubiquitin-protein ligase DTX2 (DTX2) from Homo sapiens (Human).